The primary structure comprises 472 residues: 3-isopropylmalate dehydratase large subunit (472 aa).

The [4Fe-4S] cluster site is built by cysteine 353, cysteine 414, and cysteine 417.

Belongs to the aconitase/IPM isomerase family. LeuC type 1 subfamily. In terms of assembly, heterodimer of LeuC and LeuD. [4Fe-4S] cluster serves as cofactor.

The enzyme catalyses (2R,3S)-3-isopropylmalate = (2S)-2-isopropylmalate. Its pathway is amino-acid biosynthesis; L-leucine biosynthesis; L-leucine from 3-methyl-2-oxobutanoate: step 2/4. Catalyzes the isomerization between 2-isopropylmalate and 3-isopropylmalate, via the formation of 2-isopropylmaleate. This is 3-isopropylmalate dehydratase large subunit from Psychrobacter cryohalolentis (strain ATCC BAA-1226 / DSM 17306 / VKM B-2378 / K5).